A 171-amino-acid chain; its full sequence is NADH-quinone oxidoreductase subunit B (171 aa).

[4Fe-4S] cluster contacts are provided by cysteine 39, cysteine 40, cysteine 105, and cysteine 134.

The protein belongs to the complex I 20 kDa subunit family. NDH-1 is composed of 14 different subunits. Subunits NuoB, C, D, E, F, and G constitute the peripheral sector of the complex. It depends on [4Fe-4S] cluster as a cofactor.

Its subcellular location is the cell inner membrane. The enzyme catalyses a quinone + NADH + 5 H(+)(in) = a quinol + NAD(+) + 4 H(+)(out). NDH-1 shuttles electrons from NADH, via FMN and iron-sulfur (Fe-S) centers, to quinones in the respiratory chain. The immediate electron acceptor for the enzyme in this species is believed to be ubiquinone. Couples the redox reaction to proton translocation (for every two electrons transferred, four hydrogen ions are translocated across the cytoplasmic membrane), and thus conserves the redox energy in a proton gradient. The sequence is that of NADH-quinone oxidoreductase subunit B from Aliarcobacter butzleri (strain RM4018) (Arcobacter butzleri).